Reading from the N-terminus, the 395-residue chain is Proteinase-activated receptor 2 (395 aa).

An N-terminal signal peptide occupies residues 1-25 (MRSPSAAWLLGGVLLLAASGSCNRT). 2 N-linked (GlcNAc...) asparagine glycosylation sites follow: N23 and N29. Positions 26-34 (VPGNKSKGR) are cleaved as a propeptide — removed for receptor activation. The Extracellular segment spans residues 35-69 (SLIGNVDNSPVVAGRGVTVKPGFSVDEFSTSVLTG). Residues 70–99 (KLTTVFLPVVYTIVFVVGLPSNGMALWVFL) traverse the membrane as a helical segment. The Cytoplasmic segment spans residues 100–106 (FRTKKKH). A helical transmembrane segment spans residues 107 to 135 (PAVIYMANLALADLLSVTWFPLKIAYHIH). At 136–147 (GNNWIYGESLCK) the chain is on the extracellular side. C146 and C224 are oxidised to a cystine. Residues 148–175 (VLIGFFYGNMYCSILFMTCLSVQRYWVI) traverse the membrane as a helical segment. Over 176-181 (VNPMVH) the chain is Cytoplasmic. The helical transmembrane segment at 182-209 (PKKQANIAIGVSLGIWLLILLLTIPLYV) threads the bilayer. At 210–233 (VKQTSYIRALNITTCHDVLPEEVL) the chain is on the extracellular side. Residue N220 is glycosylated (N-linked (GlcNAc...) asparagine). A helical transmembrane segment spans residues 234–267 (VGDMFNYFLSLAIGVFLFPAFLTASAYVLMIRTL). Over 268 to 275 (QSSAMDES) the chain is Cytoplasmic. The chain crosses the membrane as a helical span at residues 276 to 315 (SGKKRRRAIKLIVTVLAMYLICFTPSNLLLVVHYFLIKTR). Topologically, residues 316 to 321 (GQSHVY) are extracellular. A helical membrane pass occupies residues 322-345 (ALYIVALCLSTLNSCIDPFVYYFI). The Cytoplasmic portion of the chain corresponds to 346–395 (SQDFRDHAKNALLCRSVRTVKRMQVSLSSKKFSGKSSSYSSSSTSVKGSY). C359 carries S-palmitoyl cysteine lipidation.

This sequence belongs to the G-protein coupled receptor 1 family. Interacts with TLR4, COPS5 and TMED2. Interacts with GNAQ, GNA11, GNA12, GNA13 and GNA14. Post-translationally, a proteolytic cleavage generates a new N-terminus that functions as a tethered ligand. Activating serine proteases include trypsin, mast cell tryptase, coagulation factors VII and Xa, myeloblastin/PRTN3 and membrane-type serine protease 1/ST14. Proposed subsequent cleavage by serine proteases is leading to receptor deactivation and include neutrophil elastase and cathepsin G. At least in part, implicated proteases are also shown to activate the receptor; the glycosylation status of the receptor is thought to contribute to the difference. In terms of processing, N-glycosylated and sialylated. Multiple phosphorylated on serine and threonine residues in the cytoplasmic region upon receptor activation; required for receptor desensitization and recruitment of beta-arrestin. Post-translationally, monoubiquitinated by CBL at the plasma membrane and in early endosomes; not required for receptor endocytosis but for translocation to late endosomes or lysosomes. Deubiquitination involves STAMBP and USP8; required for lysosomal trafficking and receptor degradation.

It localises to the cell membrane. Functionally, receptor for trypsin and trypsin-like enzymes coupled to G proteins. Its function is mediated through the activation of several signaling pathways including phospholipase C (PLC), intracellular calcium, mitogen-activated protein kinase (MAPK), I-kappaB kinase/NF-kappaB and Rho. Can also be transactivated by cleaved F2R/PAR1. Involved in modulation of inflammatory responses and regulation of innate and adaptive immunity, and acts as a sensor for proteolytic enzymes generated during infection. Generally is promoting inflammation. Can signal synergistically with TLR4 and probably TLR2 in inflammatory responses and modulates TLR3 signaling. Has a protective role in establishing the endothelial barrier; the activity involves coagulation factor X. Regulates endothelial cell barrier integrity during neutrophil extravasation, probably following proteolytic cleavage by PRTN3. Proposed to have a bronchoprotective role in airway epithelium, but also shown to compromise the airway epithelial barrier by interrupting E-cadherin adhesion. Involved in the regulation of vascular tone; activation results in hypotension presumably mediated by vasodilation. Associates with a subset of G proteins alpha subunits such as GNAQ, GNA11, GNA14, GNA12 and GNA13, but probably not with G(o) alpha, G(i) subunit alpha-1 and G(i) subunit alpha-2. Believed to be a class B receptor which internalizes as a complex with arrestin and traffic with it to endosomal vesicles, presumably as desensitized receptor, for extended periods of time. Mediates inhibition of TNF-alpha stimulated JNK phosphorylation via coupling to GNAQ and GNA11; the function involves dissociation of RIPK1 and TRADD from TNFR1. Mediates phosphorylation of nuclear factor NF-kappa-B RELA subunit at 'Ser-536'; the function involves IKBKB and is predominantly independent of G proteins. Involved in cellular migration. Involved in cytoskeletal rearrangement and chemotaxis through beta-arrestin-promoted scaffolds; the function is independent of GNAQ and GNA11 and involves promotion of cofilin dephosphorylation and actin filament severing. Induces redistribution of COPS5 from the plasma membrane to the cytosol and activation of the JNK cascade is mediated by COPS5. Involved in the recruitment of leukocytes to the sites of inflammation and is the major PAR receptor capable of modulating eosinophil function such as pro-inflammatory cytokine secretion, superoxide production and degranulation. During inflammation promotes dendritic cell maturation, trafficking to the lymph nodes and subsequent T-cell activation. Involved in antimicrobial response of innate immune cells; activation enhances phagocytosis of Gram-positive and killing of Gram-negative bacteria. Acts synergistically with interferon-gamma in enhancing antiviral responses. Probably mediates activation of pro-inflammatory and pro-fibrotic responses in fibroblasts, triggered by coagulation factor Xa (F10). Probably mediates activation of barrier protective signaling responses in endothelial cells, triggered by coagulation factor Xa (F10). The sequence is that of Proteinase-activated receptor 2 (F2RL1) from Bos taurus (Bovine).